Consider the following 319-residue polypeptide: GPI-specific phospholipase A2-like PGAP3 (319 aa).

An N-terminal signal peptide occupies residues 1 to 23 (MAGRTARLVLLAGAAALASGSQG). The Lumenal portion of the chain corresponds to 24 to 101 (DREPVYRDCV…GKWPFSRFLC (78 aa)). Asparagine 40 carries an N-linked (GlcNAc...) asparagine glycan. The helical transmembrane segment at 102–122 (FQEPASAVASFLNGLASLVML) threads the bilayer. Residues 123–135 (CRYRTSVPASSPM) lie on the Cytoplasmic side of the membrane. Residues 136-156 (YPTCVAFAWVSLNAWFWSTVF) traverse the membrane as a helical segment. Residues 157–169 (HTRDTDLTEKMDY) lie on the Lumenal side of the membrane. A helical membrane pass occupies residues 170–190 (FCASTVILHSIYLCCVRTVGL). The Cytoplasmic portion of the chain corresponds to 191–200 (QHPAMASAFR). A helical transmembrane segment spans residues 201-221 (ALLLLLLTAHVSYLSLIHFDY). Residues 222-224 (GYN) lie on the Lumenal side of the membrane. A helical transmembrane segment spans residues 225 to 245 (MAANVAIGLLNAAWWLAWCLW). The Cytoplasmic portion of the chain corresponds to 246-257 (NQRLPHVHKCVA). The helical transmembrane segment at 258 to 278 (VVLLLQGLSLLELLDFPPLFW) threads the bilayer. At 279 to 281 (VLD) the chain is on the lumenal side. Residues 282–302 (AHAIWHISTIPVHVLFFSFLE) form a helical membrane-spanning segment. Residues 303-319 (DDSLYLLKESEAKVKLD) lie on the Cytoplasmic side of the membrane.

This sequence belongs to the PGAP3 family.

It is found in the golgi apparatus membrane. In terms of biological role, involved in the fatty acid remodeling steps of GPI-anchor maturation where the unsaturated acyl chain at sn-2 of inositol phosphate is replaced by a saturated stearoyl chain. May catalyze the first step of the fatty acid remodeling, by removing the unsaturated acyl chain at sn-2 of inositol phosphate, generating a lyso-GPI intermediate. The fatty acid remodeling steps is critical for the integration of GPI-APs into lipid rafts. This is GPI-specific phospholipase A2-like PGAP3 from Bos taurus (Bovine).